A 90-amino-acid polypeptide reads, in one-letter code: UDP-N-acetylglucosamine 1-carboxyvinyltransferase (90 aa).

Belongs to the EPSP synthase family. MurA subfamily.

It is found in the cytoplasm. It carries out the reaction phosphoenolpyruvate + UDP-N-acetyl-alpha-D-glucosamine = UDP-N-acetyl-3-O-(1-carboxyvinyl)-alpha-D-glucosamine + phosphate. It functions in the pathway cell wall biogenesis; peptidoglycan biosynthesis. Functionally, cell wall formation. Adds enolpyruvyl to UDP-N-acetylglucosamine. The sequence is that of UDP-N-acetylglucosamine 1-carboxyvinyltransferase (murA) from Mycobacteroides chelonae (Mycobacterium chelonae).